We begin with the raw amino-acid sequence, 1394 residues long: Adhesion and penetration protein autotransporter (1394 aa).

The first 25 residues, 1–25, serve as a signal peptide directing secretion; the sequence is MKKTVFRLNFLTACISLGIVSQAWA. The Peptidase S6 domain maps to 26-286; sequence GHTYFGIDYQ…QLVRKSYFDE (261 aa). Residue S243 is part of the active site. Disordered regions lie at residues 848–870 and 995–1027; these read AYSASSNNTPRRRSLETETTPTS and TLEAKQVEPTAKTQTGEPKVRSRRAARAAFPDT. One can recognise an Autotransporter domain in the interval 1140 to 1394; it reads VDQAQSAVWT…NVGVKLGYRW (255 aa).

The protein resides in the periplasm. The protein localises to the secreted. Its subcellular location is the cell surface. It localises to the cell outer membrane. Probable protease; promotes adherence and invasion by directly binding to a host cell structure. This is Adhesion and penetration protein autotransporter (hap) from Haemophilus influenzae.